Here is a 647-residue protein sequence, read N- to C-terminus: Phosphatidylinositol polyphosphate 5-phosphatase type IV (647 aa).

Disordered stretches follow at residues 1–80, 101–131, and 177–196; these read MPSK…QPPI, RGSQEDLTVQNGASPCRGSLQDSVAQSPAYS, and HRDAASGGPPSRLASLHASH. The stretch at 52–55 is repeat 1; sequence PMPP. The tract at residues 52 to 243 is 3 X 4 AA repeats of P-X-X-P; it reads PMPPFSIPAK…AHSNLGPSRP (192 aa). Positions 60-75 are enriched in polar residues; the sequence is AKTSNQNPQTKANLIT. The stretch at 76 to 79 is repeat 2; sequence PQPP. Ser103 is subject to Phosphoserine. Positions 120–129 are enriched in polar residues; sequence LQDSVAQSPA. Position 197 is a phosphothreonine (Thr197). Copy 3 of the repeat occupies 240–243; the sequence is PSRP. A phosphoserine mark is found at Ser245 and Ser259. Cys644 is modified (cysteine methyl ester). Cys644 is lipidated: S-farnesyl cysteine. Residues 645–647 constitute a propeptide, removed in mature form; it reads TVS.

Belongs to the inositol polyphosphate 5-phosphatase family. As to quaternary structure, interacts (when prenylated) with PDE6D; this is important for normal location in cilia. In terms of tissue distribution, highly expressed in testis, in pachytene and diplotene spermatocytes, but not in more mature elongating spermatids. Detected in neurons throughout the brain.

Its subcellular location is the cytoplasm. It is found in the cytoskeleton. The protein resides in the cilium axoneme. The protein localises to the golgi apparatus. It localises to the golgi stack membrane. Its subcellular location is the cell projection. It is found in the ruffle. The protein resides in the cell membrane. The protein localises to the nucleus. The catalysed reaction is a 1,2-diacyl-sn-glycero-3-phospho-(1D-myo-inositol-4,5-bisphosphate) + H2O = a 1,2-diacyl-sn-glycero-3-phospho-(1D-myo-inositol 4-phosphate) + phosphate. The enzyme catalyses a 1,2-diacyl-sn-glycero-3-phospho-(1D-myo-inositol-3,4,5-trisphosphate) + H2O = a 1,2-diacyl-sn-glycero-3-phospho-(1D-myo-inositol-3,4-bisphosphate) + phosphate. It carries out the reaction a 1,2-diacyl-sn-glycero-3-phospho-(1D-myo-inositol-3,5-bisphosphate) + H2O = a 1,2-diacyl-sn-glycero-3-phospho-(1D-myo-inositol-3-phosphate) + phosphate. Its function is as follows. Phosphatidylinositol (PtdIns) phosphatase that specifically hydrolyzes the 5-phosphate of phosphatidylinositol-3,4,5-trisphosphate (PtdIns(3,4,5)P3), phosphatidylinositol 4,5-bisphosphate (PtdIns(4,5)P2) and phosphatidylinositol 3,5-bisphosphate (PtdIns(3,5)P2). Specific for lipid substrates, inactive towards water soluble inositol phosphates. Specific for lipid substrates, inactive towards water soluble inositol phosphates. Plays an essential role in the primary cilium by controlling ciliary growth and phosphoinositide 3-kinase (PI3K) signaling and stability. In Mus musculus (Mouse), this protein is Phosphatidylinositol polyphosphate 5-phosphatase type IV (Inpp5e).